The primary structure comprises 442 residues: Tubulin beta chain (442 aa).

GTP-binding residues include glutamine 11, glutamate 69, serine 138, glycine 142, threonine 143, glycine 144, asparagine 204, and asparagine 226. A Mg(2+)-binding site is contributed by glutamate 69. The segment at 421–442 (EYQQYQDATAEDEEEMDEEQME) is disordered. A compositionally biased stretch (acidic residues) spans 429 to 442 (TAEDEEEMDEEQME).

It belongs to the tubulin family. In terms of assembly, dimer of alpha and beta chains. A typical microtubule is a hollow water-filled tube with an outer diameter of 25 nm and an inner diameter of 15 nM. Alpha-beta heterodimers associate head-to-tail to form protofilaments running lengthwise along the microtubule wall with the beta-tubulin subunit facing the microtubule plus end conferring a structural polarity. Microtubules usually have 13 protofilaments but different protofilament numbers can be found in some organisms and specialized cells. It depends on Mg(2+) as a cofactor.

Its subcellular location is the cytoplasm. The protein resides in the cytoskeleton. In terms of biological role, tubulin is the major constituent of microtubules, a cylinder consisting of laterally associated linear protofilaments composed of alpha- and beta-tubulin heterodimers. Microtubules grow by the addition of GTP-tubulin dimers to the microtubule end, where a stabilizing cap forms. Below the cap, tubulin dimers are in GDP-bound state, owing to GTPase activity of alpha-tubulin. In Stylonychia lemnae (Ciliate), this protein is Tubulin beta chain (TUBB1).